Consider the following 275-residue polypeptide: Putative acyl-[acyl-carrier-protein] desaturase DesA2 (275 aa).

Positions 107, 110, 159, 189, and 192 each coordinate Fe cation.

This sequence belongs to the fatty acid desaturase type 2 family. As to quaternary structure, homodimer. Fe(2+) is required as a cofactor.

It functions in the pathway lipid metabolism; fatty acid metabolism. May be a desaturase involved in mycobacterial fatty acid biosynthesis. In Mycobacterium tuberculosis (strain CDC 1551 / Oshkosh), this protein is Putative acyl-[acyl-carrier-protein] desaturase DesA2 (desA2).